The primary structure comprises 238 residues: 2-C-methyl-D-erythritol 4-phosphate cytidylyltransferase (238 aa).

It belongs to the IspD/TarI cytidylyltransferase family. IspD subfamily.

The catalysed reaction is 2-C-methyl-D-erythritol 4-phosphate + CTP + H(+) = 4-CDP-2-C-methyl-D-erythritol + diphosphate. Its pathway is isoprenoid biosynthesis; isopentenyl diphosphate biosynthesis via DXP pathway; isopentenyl diphosphate from 1-deoxy-D-xylulose 5-phosphate: step 2/6. Catalyzes the formation of 4-diphosphocytidyl-2-C-methyl-D-erythritol from CTP and 2-C-methyl-D-erythritol 4-phosphate (MEP). The polypeptide is 2-C-methyl-D-erythritol 4-phosphate cytidylyltransferase (Acinetobacter baumannii (strain SDF)).